The sequence spans 342 residues: Ferredoxin--NADP reductase (342 aa).

FAD is bound by residues Cys-17, Asp-36, Gln-44, Tyr-49, Val-89, Phe-124, Asp-289, and Thr-330.

The protein belongs to the ferredoxin--NADP reductase type 2 family. Homodimer. Requires FAD as cofactor.

The enzyme catalyses 2 reduced [2Fe-2S]-[ferredoxin] + NADP(+) + H(+) = 2 oxidized [2Fe-2S]-[ferredoxin] + NADPH. The chain is Ferredoxin--NADP reductase from Nitrobacter hamburgensis (strain DSM 10229 / NCIMB 13809 / X14).